Reading from the N-terminus, the 342-residue chain is 3-isopropylmalate dehydrogenase (342 aa).

Positions 87, 97, 121, and 212 each coordinate substrate. Mg(2+) contacts are provided by Asp-212, Asp-236, and Asp-240. 272 to 284 (GSAPDIAGRQLAD) serves as a coordination point for NAD(+). Residues 319–328 (RAAAGAAQPS) show a composition bias toward low complexity. The disordered stretch occupies residues 319 to 342 (RAAAGAAQPSTRERGEDLAARAAG). A compositionally biased stretch (basic and acidic residues) spans 329–342 (TRERGEDLAARAAG).

This sequence belongs to the isocitrate and isopropylmalate dehydrogenases family. LeuB type 2 subfamily. In terms of assembly, homodimer. It depends on Mg(2+) as a cofactor. Requires Mn(2+) as cofactor.

It localises to the cytoplasm. The enzyme catalyses (2R,3S)-3-isopropylmalate + NAD(+) = 4-methyl-2-oxopentanoate + CO2 + NADH. The protein operates within amino-acid biosynthesis; L-leucine biosynthesis; L-leucine from 3-methyl-2-oxobutanoate: step 3/4. Its function is as follows. Catalyzes the oxidation of 3-carboxy-2-hydroxy-4-methylpentanoate (3-isopropylmalate) to 3-carboxy-4-methyl-2-oxopentanoate. The product decarboxylates to 4-methyl-2 oxopentanoate. The protein is 3-isopropylmalate dehydrogenase of Frankia casuarinae (strain DSM 45818 / CECT 9043 / HFP020203 / CcI3).